The primary structure comprises 73 residues: Putative membrane protein insertion efficiency factor (73 aa).

It belongs to the UPF0161 family.

It is found in the cell inner membrane. Could be involved in insertion of integral membrane proteins into the membrane. The protein is Putative membrane protein insertion efficiency factor of Parabacteroides distasonis (strain ATCC 8503 / DSM 20701 / CIP 104284 / JCM 5825 / NCTC 11152).